A 318-amino-acid polypeptide reads, in one-letter code: tRNA U34 carboxymethyltransferase (318 aa).

Residues Lys88, Trp102, Lys107, Gly126, Met192, Tyr196, and Arg311 each coordinate carboxy-S-adenosyl-L-methionine.

The protein belongs to the class I-like SAM-binding methyltransferase superfamily. CmoB family. In terms of assembly, homotetramer.

The enzyme catalyses carboxy-S-adenosyl-L-methionine + 5-hydroxyuridine(34) in tRNA = 5-carboxymethoxyuridine(34) in tRNA + S-adenosyl-L-homocysteine + H(+). Its function is as follows. Catalyzes carboxymethyl transfer from carboxy-S-adenosyl-L-methionine (Cx-SAM) to 5-hydroxyuridine (ho5U) to form 5-carboxymethoxyuridine (cmo5U) at position 34 in tRNAs. The chain is tRNA U34 carboxymethyltransferase from Pseudomonas fluorescens (strain Pf0-1).